We begin with the raw amino-acid sequence, 265 residues long: Protein IL-40 (265 aa).

A signal peptide spans 1-20 (MGLPGLFCLAVLAASSFSKA). Asparagine 86 and asparagine 132 each carry an N-linked (GlcNAc...) asparagine glycan.

Expressed in fetal liver and bone marrow. Expressed in peripheral blood lymphocyte B cells.

The protein resides in the secreted. Functionally, probable B cell-associated cytokine that plays a role in the regulation of humoral immune responses. Involved in lymphocyte B cell development and immunoglobulin/IgA production. The polypeptide is Protein IL-40 (Homo sapiens (Human)).